The primary structure comprises 215 residues: UPF0502 protein YceH (215 aa).

Belongs to the UPF0502 family.

This Salmonella heidelberg (strain SL476) protein is UPF0502 protein YceH.